The sequence spans 414 residues: Translation initiation factor 2 subunit gamma (414 aa).

Residues 7–204 (QPEVNIGLVG…ALQTEIATPD (198 aa)) form the tr-type G domain. The tract at residues 16-23 (GHVDHGKT) is G1. The Mg(2+) site is built by Asp19, Thr23, Gly44, and Ser46. 19 to 24 (DHGKTT) is a GTP binding site. The tract at residues 44 to 48 (GISIR) is G2. The interval 91-94 (DAPG) is G3. GTP is bound by residues 147 to 150 (NKVD) and 182 to 184 (SAE). Residues 147 to 150 (NKVD) are G4. The segment at 182–184 (SAE) is G5.

Belongs to the TRAFAC class translation factor GTPase superfamily. Classic translation factor GTPase family. EIF2G subfamily. Heterotrimer composed of an alpha, a beta and a gamma chain. It depends on Mg(2+) as a cofactor.

It carries out the reaction GTP + H2O = GDP + phosphate + H(+). Functionally, eIF-2 functions in the early steps of protein synthesis by forming a ternary complex with GTP and initiator tRNA. This Halobacterium salinarum (strain ATCC 29341 / DSM 671 / R1) protein is Translation initiation factor 2 subunit gamma.